Here is a 642-residue protein sequence, read N- to C-terminus: Threonine--tRNA ligase (642 aa).

Residues methionine 1–threonine 61 form the TGS domain. A catalytic region spans residues aspartate 243–proline 534. Lysine 286 bears the N6-acetyllysine mark. Zn(2+) contacts are provided by cysteine 334, histidine 385, and histidine 511.

It belongs to the class-II aminoacyl-tRNA synthetase family. As to quaternary structure, homodimer. The cofactor is Zn(2+).

The protein localises to the cytoplasm. It carries out the reaction tRNA(Thr) + L-threonine + ATP = L-threonyl-tRNA(Thr) + AMP + diphosphate + H(+). Catalyzes the attachment of threonine to tRNA(Thr) in a two-step reaction: L-threonine is first activated by ATP to form Thr-AMP and then transferred to the acceptor end of tRNA(Thr). Also edits incorrectly charged L-seryl-tRNA(Thr). This chain is Threonine--tRNA ligase, found in Escherichia coli O157:H7.